The primary structure comprises 456 residues: Maturase-like protein 1 (456 aa).

It to group II intron maturases.

The protein resides in the plastid. In terms of biological role, could be required for group III intron excision. The polypeptide is Maturase-like protein 1 (mat1) (Euglena longa (Euglenophycean alga)).